Here is a 328-residue protein sequence, read N- to C-terminus: Malate dehydrogenase (328 aa).

11–17 provides a ligand contact to NAD(+); it reads GAAGQIG. Substrate is bound by residues R94 and R100. NAD(+) contacts are provided by residues N107, Q114, and 131-133; that span reads VGN. Substrate is bound by residues N133 and R164. The Proton acceptor role is filled by H189.

Belongs to the LDH/MDH superfamily. MDH type 2 family.

It carries out the reaction (S)-malate + NAD(+) = oxaloacetate + NADH + H(+). Functionally, catalyzes the reversible oxidation of malate to oxaloacetate. This is Malate dehydrogenase from Xanthomonas axonopodis pv. citri (strain 306).